Consider the following 202-residue polypeptide: Cold-regulated 413 plasma membrane protein 4 (202 aa).

Residues 1 to 42 (MGRGEFLAMKTEENAANLINSDMNEFVAAAKKLVKDVGMLGG) are Extracellular-facing. The chain crosses the membrane as a helical span at residues 43–63 (VGFGTSVLQWAASIFAIYLLI). Residues 64-72 (LDRTNWKTK) lie on the Cytoplasmic side of the membrane. Residues 73-93 (MLTTLLVPYIFFTLPSVIFQF) form a helical membrane-spanning segment. The Extracellular portion of the chain corresponds to 94–97 (FSGD). A helical transmembrane segment spans residues 98–118 (FGKWIALIAIIVRLFFPKEFP). E119 is a topological domain (cytoplasmic). The chain crosses the membrane as a helical span at residues 120-140 (WLEIPVALILIVVVSPSLIAW). Over 141–145 (TLRES) the chain is Extracellular. A helical transmembrane segment spans residues 146 to 166 (WVGAVICLVIACYLFHEHIKA). Over 167-181 (SGGFKNSFTQKNGIS) the chain is Cytoplasmic. A helical membrane pass occupies residues 182–202 (NTIGIVALLVYPVWTIFFHIF).

Belongs to the Cold-regulated 413 protein family.

It localises to the cell membrane. The polypeptide is Cold-regulated 413 plasma membrane protein 4 (Arabidopsis thaliana (Mouse-ear cress)).